A 335-amino-acid polypeptide reads, in one-letter code: Flagellar P-ring protein (335 aa).

A signal peptide spans 1–24; it reads MNKITNFLILSAVLFFSLIESANA.

Belongs to the FlgI family. As to quaternary structure, the basal body constitutes a major portion of the flagellar organelle and consists of four rings (L,P,S, and M) mounted on a central rod.

The protein localises to the periplasm. It localises to the bacterial flagellum basal body. In terms of biological role, assembles around the rod to form the L-ring and probably protects the motor/basal body from shearing forces during rotation. The chain is Flagellar P-ring protein from Bdellovibrio bacteriovorus (strain ATCC 15356 / DSM 50701 / NCIMB 9529 / HD100).